The primary structure comprises 188 residues: MKLIVGLGNPGTKFVNTRHNVGFAVVDSFLSQNKYQILKEDKTDHIYQINFNHHQSLLIKPQTYMNLSGEVVKKIINKYRIKIENILVIVDDIYLDEGKLKLKMQGGHGGHNGLRNIIDRLGTKQFKRLKIGVSLDSCMPLDQYLLTPVNASSQKNILKNINIINKIIFNFIQDVDFNILMNGYNSKL.

Phe14 is a tRNA binding site. His19 (proton acceptor) is an active-site residue. TRNA-binding residues include Tyr64, Asn66, and Asn112.

The protein belongs to the PTH family. As to quaternary structure, monomer.

It is found in the cytoplasm. It carries out the reaction an N-acyl-L-alpha-aminoacyl-tRNA + H2O = an N-acyl-L-amino acid + a tRNA + H(+). Functionally, hydrolyzes ribosome-free peptidyl-tRNAs (with 1 or more amino acids incorporated), which drop off the ribosome during protein synthesis, or as a result of ribosome stalling. In terms of biological role, catalyzes the release of premature peptidyl moieties from peptidyl-tRNA molecules trapped in stalled 50S ribosomal subunits, and thus maintains levels of free tRNAs and 50S ribosomes. This Onion yellows phytoplasma (strain OY-M) protein is Peptidyl-tRNA hydrolase.